Consider the following 280-residue polypeptide: Urease accessory protein UreD (280 aa).

The protein belongs to the UreD family. UreD, UreF and UreG form a complex that acts as a GTP-hydrolysis-dependent molecular chaperone, activating the urease apoprotein by helping to assemble the nickel containing metallocenter of UreC. The UreE protein probably delivers the nickel.

It localises to the cytoplasm. Functionally, required for maturation of urease via the functional incorporation of the urease nickel metallocenter. The chain is Urease accessory protein UreD from Pseudomonas aeruginosa (strain UCBPP-PA14).